The chain runs to 344 residues: tRNA N6-adenosine threonylcarbamoyltransferase (344 aa).

Fe cation-binding residues include H115 and H119. Substrate-binding positions include 137-141 (LVSGG), D170, G183, D187, and N276. A Fe cation-binding site is contributed by D306.

Belongs to the KAE1 / TsaD family. It depends on Fe(2+) as a cofactor.

The protein localises to the cytoplasm. It carries out the reaction L-threonylcarbamoyladenylate + adenosine(37) in tRNA = N(6)-L-threonylcarbamoyladenosine(37) in tRNA + AMP + H(+). Its function is as follows. Required for the formation of a threonylcarbamoyl group on adenosine at position 37 (t(6)A37) in tRNAs that read codons beginning with adenine. Is involved in the transfer of the threonylcarbamoyl moiety of threonylcarbamoyl-AMP (TC-AMP) to the N6 group of A37, together with TsaE and TsaB. TsaD likely plays a direct catalytic role in this reaction. In Limosilactobacillus fermentum (strain NBRC 3956 / LMG 18251) (Lactobacillus fermentum), this protein is tRNA N6-adenosine threonylcarbamoyltransferase.